The primary structure comprises 340 residues: UDP-N-acetylenolpyruvoylglucosamine reductase (340 aa).

An FAD-binding PCMH-type domain is found at 11 to 181 (ISVKAKKIIS…VAIGLKLKKK (171 aa)). R156 is a catalytic residue. The Proton donor role is filled by S227. E323 is an active-site residue.

It belongs to the MurB family. It depends on FAD as a cofactor.

The protein resides in the cytoplasm. The enzyme catalyses UDP-N-acetyl-alpha-D-muramate + NADP(+) = UDP-N-acetyl-3-O-(1-carboxyvinyl)-alpha-D-glucosamine + NADPH + H(+). It functions in the pathway cell wall biogenesis; peptidoglycan biosynthesis. Its function is as follows. Cell wall formation. The protein is UDP-N-acetylenolpyruvoylglucosamine reductase of Wigglesworthia glossinidia brevipalpis.